A 304-amino-acid chain; its full sequence is Ribosomal RNA small subunit methyltransferase H (304 aa).

S-adenosyl-L-methionine is bound by residues 37–39, Asp57, Phe79, Asp100, and His107; that span reads AGH.

The protein belongs to the methyltransferase superfamily. RsmH family.

It localises to the cytoplasm. The catalysed reaction is cytidine(1402) in 16S rRNA + S-adenosyl-L-methionine = N(4)-methylcytidine(1402) in 16S rRNA + S-adenosyl-L-homocysteine + H(+). Its function is as follows. Specifically methylates the N4 position of cytidine in position 1402 (C1402) of 16S rRNA. In Bacteroides thetaiotaomicron (strain ATCC 29148 / DSM 2079 / JCM 5827 / CCUG 10774 / NCTC 10582 / VPI-5482 / E50), this protein is Ribosomal RNA small subunit methyltransferase H.